A 35-amino-acid chain; its full sequence is Manganese peroxidase (35 aa).

A compositionally biased stretch (basic and acidic residues) spans 1–11 (LSLLGHDERVT). The disordered stretch occupies residues 1–35 (LSLLGHDERVTPEPFDSVTAQNARGNQADVQSLPR). Polar residues predominate over residues 18–35 (VTAQNARGNQADVQSLPR).

It belongs to the peroxidase family. It depends on heme b as a cofactor. Ca(2+) is required as a cofactor.

It carries out the reaction 2 Mn(2+) + H2O2 + 2 H(+) = 2 Mn(3+) + 2 H2O. In terms of biological role, has manganese peroxidase activity. The chain is Manganese peroxidase from Irpex lacteus (Milk-white toothed polypore).